Reading from the N-terminus, the 334-residue chain is D-fructose 1,6-bisphosphatase class 2/sedoheptulose 1,7-bisphosphatase (334 aa).

Mn(2+) is bound by residues D33, E57, D85, and E88. Residues 88–90, Y119, 164–166, and 186–188 each bind substrate; these read EGT, RAR, and DGD. A Mn(2+)-binding site is contributed by E213.

It belongs to the FBPase class 2 family. In terms of assembly, homotetramer. The cofactor is Mn(2+).

The enzyme catalyses beta-D-fructose 1,6-bisphosphate + H2O = beta-D-fructose 6-phosphate + phosphate. It carries out the reaction D-sedoheptulose 1,7-bisphosphate + H2O = D-sedoheptulose 7-phosphate + phosphate. The protein operates within carbohydrate biosynthesis; Calvin cycle. Functionally, catalyzes the hydrolysis of fructose 1,6-bisphosphate (Fru 1,6-P2) and sedoheptulose 1,7-bisphosphate (Sed 1,7-P2) to fructose 6-phosphate and sedoheptulose 7-phosphate, respectively. The sequence is that of D-fructose 1,6-bisphosphatase class 2/sedoheptulose 1,7-bisphosphatase from Prochlorococcus marinus (strain NATL1A).